Here is a 325-residue protein sequence, read N- to C-terminus: Heat-inducible transcription repressor HrcA (325 aa).

Belongs to the HrcA family.

Functionally, negative regulator of class I heat shock genes (grpE-dnaK-dnaJ and groELS operons). Prevents heat-shock induction of these operons. The protein is Heat-inducible transcription repressor HrcA of Staphylococcus aureus (strain JH1).